Consider the following 77-residue polypeptide: Acyl carrier protein (77 aa).

A Carrier domain is found at 1–76 (MSLEDDVKAI…DVIKYIQEHQ (76 aa)). Position 36 is an O-(pantetheine 4'-phosphoryl)serine (Ser36).

Belongs to the acyl carrier protein (ACP) family. Post-translationally, 4'-phosphopantetheine is transferred from CoA to a specific serine of apo-ACP by AcpS. This modification is essential for activity because fatty acids are bound in thioester linkage to the sulfhydryl of the prosthetic group.

The protein localises to the cytoplasm. It participates in lipid metabolism; fatty acid biosynthesis. Functionally, carrier of the growing fatty acid chain in fatty acid biosynthesis. In Chlamydia trachomatis serovar L2 (strain ATCC VR-902B / DSM 19102 / 434/Bu), this protein is Acyl carrier protein.